Consider the following 349-residue polypeptide: Magnesium-protoporphyrin IX monomethyl ester [oxidative] cyclase (349 aa).

The span at 1 to 10 (MTATTATAPT) shows a compositional bias: low complexity. Residues 1–23 (MTATTATAPTMRGGGRNELPPHL) are disordered.

The protein belongs to the AcsF family. It depends on Fe cation as a cofactor.

The catalysed reaction is Mg-protoporphyrin IX 13-monomethyl ester + 3 NADPH + 3 O2 + 2 H(+) = 3,8-divinyl protochlorophyllide a + 3 NADP(+) + 5 H2O. Its pathway is porphyrin-containing compound metabolism; chlorophyll biosynthesis (light-independent). Functionally, catalyzes the formation of the isocyclic ring in chlorophyll biosynthesis. Mediates the cyclase reaction, which results in the formation of divinylprotochlorophyllide (Pchlide) characteristic of all chlorophylls from magnesium-protoporphyrin IX 13-monomethyl ester (MgPMME). This chain is Magnesium-protoporphyrin IX monomethyl ester [oxidative] cyclase, found in Prochlorococcus marinus (strain MIT 9313).